Here is a 323-residue protein sequence, read N- to C-terminus: Sodium/potassium-transporting ATPase subunit beta-2 (323 aa).

Topologically, residues 1–50 are cytoplasmic; sequence MPTITEDCIDGFQQYYSRPPERPKKKSLKQMVYDSEDNSYFGRSMDSWAK. A helical; Signal-anchor for type II membrane protein transmembrane segment spans residues 51–71; it reads IGIFYVAFYGVLAALVAICMW. Over 72–323 the chain is Extracellular; it reads AFFQTLDPRI…GSVHYELLID (252 aa). Cystine bridges form between cysteine 153/cysteine 165 and cysteine 175/cysteine 189. N-linked (GlcNAc...) asparagine glycosylation is found at asparagine 180 and asparagine 206. Cysteines 241 and 298 form a disulfide.

It belongs to the X(+)/potassium ATPases subunit beta family. The sodium/potassium-transporting ATPase is composed of a catalytic alpha subunit, an auxiliary non-catalytic beta subunit and an additional regulatory subunit. As to expression, in embryos, it is expressed in the neurons of the CNS and PNS, in Garland cells and posterior spiracles. In adults, it shows a nervous system specific distribution: optic lobes, brain, thoracic ganglia and axonal pathways in the leg. Both isoforms concentrate in the adult head, isoform 2.2 being predominant. Both isoforms are weakly expressed in the thorax and very poorly expressed in the abdomen.

The protein localises to the cell membrane. This is the non-catalytic component of the active enzyme, which catalyzes the hydrolysis of ATP coupled with the exchange of Na(+) and K(+) ions across the plasma membrane. The beta subunit regulates, through assembly of alpha/beta heterodimers, the number of sodium pumps transported to the plasma membrane. The protein is Sodium/potassium-transporting ATPase subunit beta-2 (nrv2) of Drosophila melanogaster (Fruit fly).